We begin with the raw amino-acid sequence, 372 residues long: MIFPRKCQSTQRDLWNIFKLWGWTMLCCDFLAHHGTDCWTYHYSENPMNWQKARRFCRENYTDLVAIQNKAEIEYLEKTLPFSPSYYWIGIRKIGGIWTWVGTNKSLTQEAENWGDGEPNNKKNKEDCVEIYIKRKKDAGKWNDDACHKPKAALCYTASCQPWSCSGHGECVEIINNYTCNCDVGYYGPQCQFVIQCEPLEPPKLGTMDCTHPLGDFSFSSQCAFNCSEGTNLTGIEETTCGPFGNWSSPEPTCQVIQCEPLSAPDLGIMNCSHPLASFSFSSACTFSCSEGTELIGEKKTICESSGIWSNPNPICQKLDRSFSMIKEGDYNPLFIPVAVMVTAFSGLAFIIWLARRLKKGKKSKKSMDDPY.

The signal sequence occupies residues 1 to 28 (MIFPRKCQSTQRDLWNIFKLWGWTMLCC). Residues 29–38 (DFLAHHGTDC) constitute a propeptide that is removed on maturation. At 39–332 (WTYHYSENPM…FSMIKEGDYN (294 aa)) the chain is on the extracellular side. The region spanning 55 to 155 (RFCRENYTDL…ACHKPKAALC (101 aa)) is the C-type lectin domain. Intrachain disulfides connect C57-C155, C128-C147, C128-C160, C160-C171, C165-C180, C182-C191, C197-C241, C227-C254, C259-C303, and C289-C316. N-linked (GlcNAc...) asparagine glycans are attached at residues N60 and N104. Ca(2+) is bound by residues E118, N120, E126, N143, and D144. In terms of domain architecture, EGF-like spans 156-192 (YTASCQPWSCSGHGECVEIINNYTCNCDVGYYGPQCQ). An N-linked (GlcNAc...) asparagine glycan is attached at N177. 2 Sushi domains span residues 195–256 (IQCE…TCQV) and 257–318 (IQCE…ICQK). N-linked (GlcNAc...) asparagine glycans are attached at residues N226, N232, N246, and N271. A helical transmembrane segment spans residues 333 to 355 (PLFIPVAVMVTAFSGLAFIIWLA). Topologically, residues 356–372 (RRLKKGKKSKKSMDDPY) are cytoplasmic.

It belongs to the selectin/LECAM family. As to quaternary structure, interaction with SELPLG/PSGL1 and PODXL2 is required for promoting recruitment and rolling of leukocytes. This interaction is dependent on the sialyl Lewis X glycan modification of SELPLG and PODXL2, and tyrosine sulfation modifications of SELPLG. Sulfation on 'Tyr-51' of SELPLG is important for L-selectin binding. In terms of processing, N-glycosylated.

Its subcellular location is the cell membrane. Its function is as follows. Calcium-dependent lectin that mediates cell adhesion by binding to glycoproteins on neighboring cells. Mediates the adherence of lymphocytes to endothelial cells of high endothelial venules in peripheral lymph nodes. Promotes initial tethering and rolling of leukocytes in endothelia. This is L-selectin (SELL) from Macaca mulatta (Rhesus macaque).